A 218-amino-acid chain; its full sequence is Cytidylate kinase (218 aa).

Residue 7-15 (GPSASGKSS) participates in ATP binding.

It belongs to the cytidylate kinase family. Type 1 subfamily.

It is found in the cytoplasm. The enzyme catalyses CMP + ATP = CDP + ADP. It catalyses the reaction dCMP + ATP = dCDP + ADP. This is Cytidylate kinase from Borrelia duttonii (strain Ly).